Here is a 226-residue protein sequence, read N- to C-terminus: ATP-dependent dethiobiotin synthetase BioD (226 aa).

Position 12-17 (glutamate 12–valine 17) interacts with ATP. Threonine 16 provides a ligand contact to Mg(2+). Residue lysine 39 is part of the active site. Substrate is bound at residue threonine 43. Residues aspartate 47, glutamate 108 to glycine 111, asparagine 168 to cysteine 169, and proline 200 to isoleucine 202 each bind ATP. Aspartate 47 and glutamate 108 together coordinate Mg(2+).

Belongs to the dethiobiotin synthetase family. Homodimer. Mg(2+) is required as a cofactor.

It is found in the cytoplasm. It catalyses the reaction (7R,8S)-7,8-diammoniononanoate + CO2 + ATP = (4R,5S)-dethiobiotin + ADP + phosphate + 3 H(+). It carries out the reaction (7R,8S)-8-amino-7-(carboxyamino)nonanoate + ATP = (4R,5S)-dethiobiotin + ADP + phosphate + H(+). The protein operates within cofactor biosynthesis; biotin biosynthesis; biotin from 7,8-diaminononanoate: step 1/2. In terms of biological role, catalyzes a mechanistically unusual reaction, the ATP-dependent insertion of CO2 between the N7 and N8 nitrogen atoms of 7,8-diaminopelargonic acid (DAPA, also called 7,8-diammoniononanoate) to form a ureido ring. This cyanobacterium does not encode bioA (which catalyzes the formation of the precursor for this reaction in the cannonical pathway), instead it encodes bioU, which replaces bioA and also performs the first half of the cannonical BioD reaction. Thus in this organism BioD has a different substrate. The protein is ATP-dependent dethiobiotin synthetase BioD of Gloeothece citriformis (strain PCC 7424) (Cyanothece sp. (strain PCC 7424)).